A 534-amino-acid chain; its full sequence is Prolyl 4-hydroxylase subunit alpha-1 (534 aa).

A signal peptide spans 1–17 (MIWGVLMMGILLPQCSA). Asparagine 113 carries an N-linked (GlcNAc...) asparagine glycan. Residues 205-238 (VSVLDYLSYAVYQQGDLDKALLLTKKLLELDPEH) form a TPR repeat. Asparagine 259 carries N-linked (GlcNAc...) asparagine glycosylation. The Fe2OG dioxygenase domain occupies 411–519 (TAEELQVANY…KWVSNKWLHE (109 aa)). Fe cation-binding residues include histidine 429, aspartate 431, and histidine 500. Lysine 510 contacts 2-oxoglutarate.

The protein belongs to the P4HA family. Heterotetramer of two alpha-1 chains and two beta chains (P4HB)(the beta chain is the multi-functional PDI), where P4HB plays the role of a structural subunit; this tetramer catalyzes the formation of 4-hydroxyproline in collagen. Requires Fe(2+) as cofactor. The cofactor is L-ascorbate.

The protein localises to the endoplasmic reticulum lumen. The catalysed reaction is L-prolyl-[collagen] + 2-oxoglutarate + O2 = trans-4-hydroxy-L-prolyl-[collagen] + succinate + CO2. Its function is as follows. Catalyzes the post-translational formation of 4-hydroxyproline in -Xaa-Pro-Gly- sequences in collagens and other proteins. This is Prolyl 4-hydroxylase subunit alpha-1 (P4ha1) from Rattus norvegicus (Rat).